We begin with the raw amino-acid sequence, 291 residues long: MAAEEHALTSPEYIKHHLTNMTYGKMPDGTWKLAETAEEAHSMGFTAIHLDSMGWSIGLGVIFCLLFWIVARAANAGVPTKFQSAIEMIIEFVDSSVRDTFHGKSRLIAPLALTIFVWIFLMNLMDLIPVDWIPQVAAFVGANAFGMDPHHVYFKIVPSTDPNITLGMSLSVFVLILFYSIREKGVGGFVGELALNPFNPSNPVAKALLIPVNLILELVTFLARPISLALRLFGNMYAGELIFILIALLPFWIQWALSVPWAIFHILVITLQAFIFMMLTIVYLSMASEKH.

The next 6 helical transmembrane spans lie at 50–70 (LDSM…FWIV), 108–128 (IAPL…MDLI), 161–181 (DPNI…FYSI), 203–223 (PVAK…TFLA), 241–261 (LIFI…SVPW), and 262–282 (AIFH…LTIV).

The protein belongs to the ATPase A chain family. In terms of assembly, F-type ATPases have 2 components, CF(1) - the catalytic core - and CF(0) - the membrane proton channel. CF(1) has five subunits: alpha(3), beta(3), gamma(1), delta(1), epsilon(1). CF(0) has three main subunits: a(1), b(2) and c(9-12). The alpha and beta chains form an alternating ring which encloses part of the gamma chain. CF(1) is attached to CF(0) by a central stalk formed by the gamma and epsilon chains, while a peripheral stalk is formed by the delta and b chains.

It is found in the cell inner membrane. Key component of the proton channel; it plays a direct role in the translocation of protons across the membrane. The protein is ATP synthase subunit a of Acinetobacter baumannii (strain SDF).